The sequence spans 255 residues: tRNA (guanine-N(1)-)-methyltransferase (255 aa).

Residues Gly-117 and 137-142 each bind S-adenosyl-L-methionine; that span reads IGDYVL.

Belongs to the RNA methyltransferase TrmD family. In terms of assembly, homodimer.

It is found in the cytoplasm. It catalyses the reaction guanosine(37) in tRNA + S-adenosyl-L-methionine = N(1)-methylguanosine(37) in tRNA + S-adenosyl-L-homocysteine + H(+). In terms of biological role, specifically methylates guanosine-37 in various tRNAs. In Chromobacterium violaceum (strain ATCC 12472 / DSM 30191 / JCM 1249 / CCUG 213 / NBRC 12614 / NCIMB 9131 / NCTC 9757 / MK), this protein is tRNA (guanine-N(1)-)-methyltransferase.